The sequence spans 429 residues: Ribosomal RNA small subunit methyltransferase B (429 aa).

Residues 254–260 (CAAPGGK), D277, D303, and D322 each bind S-adenosyl-L-methionine. The Nucleophile role is filled by C375.

It belongs to the class I-like SAM-binding methyltransferase superfamily. RsmB/NOP family.

It is found in the cytoplasm. The enzyme catalyses cytidine(967) in 16S rRNA + S-adenosyl-L-methionine = 5-methylcytidine(967) in 16S rRNA + S-adenosyl-L-homocysteine + H(+). In terms of biological role, specifically methylates the cytosine at position 967 (m5C967) of 16S rRNA. In Pectobacterium atrosepticum (strain SCRI 1043 / ATCC BAA-672) (Erwinia carotovora subsp. atroseptica), this protein is Ribosomal RNA small subunit methyltransferase B.